Consider the following 183-residue polypeptide: TATA-box-binding protein 2 (183 aa).

2 tandem repeats follow at residues 8 to 84 (IENV…AKKL) and 99 to 177 (VQNI…RQQL).

This sequence belongs to the TBP family.

In terms of biological role, general factor that plays a role in the activation of archaeal genes transcribed by RNA polymerase. Binds specifically to the TATA box promoter element which lies close to the position of transcription initiation. The sequence is that of TATA-box-binding protein 2 from Methanosarcina mazei (strain ATCC BAA-159 / DSM 3647 / Goe1 / Go1 / JCM 11833 / OCM 88) (Methanosarcina frisia).